Here is a 306-residue protein sequence, read N- to C-terminus: Large ribosomal subunit protein bL19m (306 aa).

The segment covering 34–43 has biased composition (basic and acidic residues); sequence ENQEEQKKEA. The tract at residues 34 to 53 is disordered; that stretch reads ENQEEQKKEAPPTTPTSPVN.

Belongs to the bacterial ribosomal protein bL19 family. Component of the mitochondrial ribosome large subunit (39S) which comprises a 16S rRNA and about 50 distinct proteins.

It localises to the mitochondrion. The protein is Large ribosomal subunit protein bL19m (mRpL19) of Drosophila melanogaster (Fruit fly).